The chain runs to 453 residues: 3-phosphoshikimate 1-carboxyvinyltransferase (453 aa).

The disordered stretch occupies residues 1-25 (MSHDSEPQPVTAHPAGPLTGALKPP). Lysine 28, serine 29, and arginine 33 together coordinate 3-phosphoshikimate. Lysine 28 serves as a coordination point for phosphoenolpyruvate. The phosphoenolpyruvate site is built by glycine 101 and arginine 129. The 3-phosphoshikimate site is built by serine 175, glutamine 177, aspartate 330, and lysine 357. Glutamine 177 is a phosphoenolpyruvate binding site. Aspartate 330 (proton acceptor) is an active-site residue. Phosphoenolpyruvate contacts are provided by arginine 361 and arginine 405.

It belongs to the EPSP synthase family. As to quaternary structure, monomer.

It is found in the cytoplasm. The enzyme catalyses 3-phosphoshikimate + phosphoenolpyruvate = 5-O-(1-carboxyvinyl)-3-phosphoshikimate + phosphate. It participates in metabolic intermediate biosynthesis; chorismate biosynthesis; chorismate from D-erythrose 4-phosphate and phosphoenolpyruvate: step 6/7. Catalyzes the transfer of the enolpyruvyl moiety of phosphoenolpyruvate (PEP) to the 5-hydroxyl of shikimate-3-phosphate (S3P) to produce enolpyruvyl shikimate-3-phosphate and inorganic phosphate. This chain is 3-phosphoshikimate 1-carboxyvinyltransferase, found in Methylorubrum populi (strain ATCC BAA-705 / NCIMB 13946 / BJ001) (Methylobacterium populi).